We begin with the raw amino-acid sequence, 334 residues long: Trans-O-hydroxybenzylidenepyruvate hydratase-aldolase (334 aa).

Belongs to the DapA family.

It catalyses the reaction (3E)-4-(2-hydroxyphenyl)-2-oxobut-3-enoate + H2O = salicylaldehyde + pyruvate. It functions in the pathway aromatic compound metabolism; naphthalene degradation. Functionally, involved in the naphthalene upper catabolic pathway. Catalyzes the transformation of trans-O-hydroxybenzylidenepyruvate (THBPA) to salicylaldehyde and pyruvate. The reaction is reversible. In Pseudomonas aeruginosa, this protein is Trans-O-hydroxybenzylidenepyruvate hydratase-aldolase (pahE).